Reading from the N-terminus, the 280-residue chain is MTIKSVSVKGIDVANEQPFVLFGGMNVLESRDLAMKIAEHYVEVTQKLGIPYVFKASFDKANRSSVNSYRGPGLDEGLKIFEEIKSTFNVPIITDVHESYQAQPVSEVVDVIQLPAFLARQTDLVVAMAKTGAVINVKKPQFLAAHEMKHIITKFGEAGNENIILCERGSCYGYNNLVVDMLAMDEMKNYAPVIFDATHALQKPGGRSDSADGRRAQAAQLARSGMAIGIAGLFIEAHPDPSAAKCDGPCALPLDKLEPYLAQMKALDDLVKGFTPLITD.

This sequence belongs to the KdsA family.

The protein resides in the cytoplasm. It catalyses the reaction D-arabinose 5-phosphate + phosphoenolpyruvate + H2O = 3-deoxy-alpha-D-manno-2-octulosonate-8-phosphate + phosphate. The protein operates within carbohydrate biosynthesis; 3-deoxy-D-manno-octulosonate biosynthesis; 3-deoxy-D-manno-octulosonate from D-ribulose 5-phosphate: step 2/3. It participates in bacterial outer membrane biogenesis; lipopolysaccharide biosynthesis. This is 2-dehydro-3-deoxyphosphooctonate aldolase from Colwellia psychrerythraea (strain 34H / ATCC BAA-681) (Vibrio psychroerythus).